We begin with the raw amino-acid sequence, 276 residues long: Ribosomal RNA small subunit methyltransferase A (276 aa).

S-adenosyl-L-methionine is bound by residues asparagine 16, leucine 18, glycine 43, glutamate 64, aspartate 89, and asparagine 109.

This sequence belongs to the class I-like SAM-binding methyltransferase superfamily. rRNA adenine N(6)-methyltransferase family. RsmA subfamily.

Its subcellular location is the cytoplasm. It catalyses the reaction adenosine(1518)/adenosine(1519) in 16S rRNA + 4 S-adenosyl-L-methionine = N(6)-dimethyladenosine(1518)/N(6)-dimethyladenosine(1519) in 16S rRNA + 4 S-adenosyl-L-homocysteine + 4 H(+). Functionally, specifically dimethylates two adjacent adenosines (A1518 and A1519) in the loop of a conserved hairpin near the 3'-end of 16S rRNA in the 30S particle. May play a critical role in biogenesis of 30S subunits. The chain is Ribosomal RNA small subunit methyltransferase A from Marinobacter nauticus (strain ATCC 700491 / DSM 11845 / VT8) (Marinobacter aquaeolei).